A 341-amino-acid chain; its full sequence is Phospholipid phosphatase homolog 1.2 homolog (341 aa).

The next 3 helical transmembrane spans lie at 30–50 (LFIFFLATAAVTVIVPTLLGV), 71–91 (ITAVQLMLYNLVLNAATVLFV), and 122–142 (LLTYFGYSQIGFVMNIALNIV). Asn-162 carries N-linked (GlcNAc...) asparagine glycosylation. Helical transmembrane passes span 223 to 243 (RIVVPISQTLMFMIGLGISFS) and 257 to 277 (VGIFIGIFLAVYTCTFWTDLF). 2 disordered regions span residues 284–308 (SETQPLLLPRPPRTPRNSEDEERHR) and 322–341 (FEATGPQDSDTILLPVPQSA). The span at 299 to 308 (RNSEDEERHR) shows a compositional bias: basic and acidic residues.

The protein belongs to the PA-phosphatase related phosphoesterase family.

Its subcellular location is the membrane. The sequence is that of Phospholipid phosphatase homolog 1.2 homolog from Caenorhabditis elegans.